The sequence spans 65 residues: Large ribosomal subunit protein bL32 (65 aa).

The span at 1–19 (MAVQKSRKTPSKRGMRRSH) shows a compositional bias: basic residues. The tract at residues 1–32 (MAVQKSRKTPSKRGMRRSHNALTNPTLSEDQE) is disordered.

It belongs to the bacterial ribosomal protein bL32 family.

This chain is Large ribosomal subunit protein bL32, found in Ruthia magnifica subsp. Calyptogena magnifica.